The sequence spans 220 residues: Deoxyribose-phosphate aldolase (220 aa).

Catalysis depends on Asp-89, which acts as the Proton donor/acceptor. Lys-151 (schiff-base intermediate with acetaldehyde) is an active-site residue. Catalysis depends on Lys-180, which acts as the Proton donor/acceptor.

This sequence belongs to the DeoC/FbaB aldolase family. DeoC type 1 subfamily.

It is found in the cytoplasm. The catalysed reaction is 2-deoxy-D-ribose 5-phosphate = D-glyceraldehyde 3-phosphate + acetaldehyde. It functions in the pathway carbohydrate degradation; 2-deoxy-D-ribose 1-phosphate degradation; D-glyceraldehyde 3-phosphate and acetaldehyde from 2-deoxy-alpha-D-ribose 1-phosphate: step 2/2. Functionally, catalyzes a reversible aldol reaction between acetaldehyde and D-glyceraldehyde 3-phosphate to generate 2-deoxy-D-ribose 5-phosphate. The chain is Deoxyribose-phosphate aldolase from Staphylococcus carnosus (strain TM300).